The following is a 327-amino-acid chain: Movement protein (327 aa).

Residues 297–327 adopt a coiled-coil conformation; sequence SASSSNTENELARVSQNIDLLKNKLKEICGE.

This sequence belongs to the caulimoviridae movement protein family. In terms of assembly, homotrimer, through the coiled-coil domain. Interacts with VAP. May interact (via N-terminus) with host prenylated Rab acceptor protein 1D (PRA1D).

It localises to the host cell junction. The protein resides in the host plasmodesma. Functionally, transports viral genome to neighboring plant cells directly through plasmosdesmata, without any budding. The movement protein allows efficient cell to cell propagation, by bypassing the host cell wall barrier. Acts by forming tubules structures that increase the size exclusion limit (SEL) of plasmodesmata, thereby allowing viral ribonucleocapsids to spread directly to neighboring cells. This is Movement protein from Cauliflower mosaic virus (strain Strasbourg) (CaMV).